The following is a 156-amino-acid chain: Nucleoredoxin-like protein 2 (156 aa).

The Thioredoxin domain occupies 9–147 (RLVTREGTVV…LACFQNWVEA (139 aa)).

Belongs to the nucleoredoxin family. Both isoforms are expressed in retina, in the photoreceptor layer, and throughout the olfactory sensory neuron layer of the nasal epithelium, in neurons. Also expressed at low levels in brain and testis.

May be involved in the maintenance of both the function and the viability of sensory neurons, including photoreceptors and olfactory neurons. In the retina, isoform 1 may be required for rod function and isoform 2 for cone viability and function. The protein is Nucleoredoxin-like protein 2 (Nxnl2) of Mus musculus (Mouse).